A 423-amino-acid polypeptide reads, in one-letter code: Putative competence-damage inducible protein (423 aa).

The protein belongs to the CinA family.

The chain is Putative competence-damage inducible protein from Streptococcus equi subsp. zooepidemicus (strain H70).